The primary structure comprises 237 residues: E3 ubiquitin-protein ligase RNF166 (237 aa).

The RING-type zinc finger occupies 33–73 (CPICLEVYHRPVAIGSCGHTFCGECLQPCLQVPSPLCPLCR). 4 residues coordinate Zn(2+): Cys98, Cys101, His113, and Cys117. Residues 98 to 117 (CRGCNKKVTLAKMRVHISSC) form a C2HC RNF-type zinc finger. Residues 221–237 (DEEAAFQAALALSLSEN) form the UIM domain.

The protein resides in the cytoplasm. The catalysed reaction is S-ubiquitinyl-[E2 ubiquitin-conjugating enzyme]-L-cysteine + [acceptor protein]-L-lysine = [E2 ubiquitin-conjugating enzyme]-L-cysteine + N(6)-ubiquitinyl-[acceptor protein]-L-lysine.. Its pathway is protein modification; protein ubiquitination. In terms of biological role, E3 ubiquitin-protein ligase that promotes the ubiquitination of different substrates. In turn, participates in different biological processes including interferon production or autophagy. Plays a role in the activation of RNA virus-induced interferon-beta production by promoting the ubiquitination of TRAF3 and TRAF6. Also plays a role in the early recruitment of autophagy adapters to bacteria. Mediates 'Lys-29' and 'Lys-33'-linked ubiquitination of SQSTM1 leading to xenophagic targeting of bacteria and inhibition of their replication. This Homo sapiens (Human) protein is E3 ubiquitin-protein ligase RNF166 (RNF166).